The chain runs to 378 residues: Heme chaperone HemW (378 aa).

Positions 1-237 (MVKLPPLSLY…LTAAGYQQYE (237 aa)) constitute a Radical SAM core domain. Tyrosine 10 provides a ligand contact to S-adenosyl-L-methionine. Cysteine 16, cysteine 20, and cysteine 23 together coordinate [4Fe-4S] cluster. Residues glycine 66, 67-68 (GT), glutamate 99, glutamine 126, arginine 138, and aspartate 163 contribute to the S-adenosyl-L-methionine site.

This sequence belongs to the anaerobic coproporphyrinogen-III oxidase family. HemW subfamily. As to quaternary structure, binding of the [4Fe-4S] cofactor promotes dimerization. [4Fe-4S] cluster serves as cofactor.

It is found in the cytoplasm. Its function is as follows. Probably acts as a heme chaperone, transferring heme to the NarI subunit of the respiratory enzyme nitrate reductase; transfer may be stimulated by NADH. Binds one molecule of heme per monomer, possibly covalently. Heme binding is not affected by either [4Fe-4S] or S-adenosyl-L-methionine (SAM)-binding. Does not have coproporphyrinogen III dehydrogenase activity in vitro. Binds 1 [4Fe-4S] cluster. The cluster is coordinated with 3 cysteines and an exchangeable S-adenosyl-L-methionine. This chain is Heme chaperone HemW, found in Escherichia coli (strain K12).